A 932-amino-acid chain; its full sequence is Glycine dehydrogenase (decarboxylating) (932 aa).

Residue Lys-685 is modified to N6-(pyridoxal phosphate)lysine.

Belongs to the GcvP family. As to quaternary structure, the glycine cleavage system is composed of four proteins: P, T, L and H. Pyridoxal 5'-phosphate is required as a cofactor.

It carries out the reaction N(6)-[(R)-lipoyl]-L-lysyl-[glycine-cleavage complex H protein] + glycine + H(+) = N(6)-[(R)-S(8)-aminomethyldihydrolipoyl]-L-lysyl-[glycine-cleavage complex H protein] + CO2. The glycine cleavage system catalyzes the degradation of glycine. The P protein binds the alpha-amino group of glycine through its pyridoxal phosphate cofactor; CO(2) is released and the remaining methylamine moiety is then transferred to the lipoamide cofactor of the H protein. The sequence is that of Glycine dehydrogenase (decarboxylating) from Brucella suis (strain ATCC 23445 / NCTC 10510).